A 361-amino-acid chain; its full sequence is MALEEEEESQNAPFCVLDGLFCEEESEFHEQVDLCDESVEKFPFLNLGLSDHDMLWDDDELSTLISKQEPCLYDEILDDEFLVLCREKALDWIFKVKSHYGFNSLTALLAVNYFDRFITSRKFQTDKPWMSQLTALACLSLAAKVEEIRVPFLLDFQVEEARYVFEAKTIQRMELLVLSTLDWRMHPVTPISFFDHIIRRYSFKSHHQLEFLSRCESLLLSIIPDSRFLSFSPSVLATAIMVSVIRDLKMCDEAVYQSQLMTLLKVDSEKVNKCYELVLDHSPSKKRMMNWMQQPASPIGVFDASFSSDSSNESWVVSASASVSSSPSSEPLLKRRRVQEQQMRLSSINRMFFDVLSSSPR.

The protein belongs to the cyclin family. Cyclin D subfamily.

Its function is as follows. Promotes divisions in the guard cells (GCs) after the guard mother cells (GMC) symmetric division. In Arabidopsis thaliana (Mouse-ear cress), this protein is Cyclin-D3-3 (CYCD3-3).